A 652-amino-acid polypeptide reads, in one-letter code: DNA ligase (652 aa).

NAD(+) is bound by residues 29–33 (DAEYD), 78–79 (SL), and Glu107. Catalysis depends on Lys109, which acts as the N6-AMP-lysine intermediate. NAD(+) is bound by residues Arg130, Glu164, Lys278, and Lys302. 4 residues coordinate Zn(2+): Cys395, Cys398, Cys413, and Cys418. The BRCT domain occupies 577–652 (ASDAALTGMT…IKDEAWLESL (76 aa)).

This sequence belongs to the NAD-dependent DNA ligase family. LigA subfamily. Mg(2+) serves as cofactor. The cofactor is Mn(2+).

The catalysed reaction is NAD(+) + (deoxyribonucleotide)n-3'-hydroxyl + 5'-phospho-(deoxyribonucleotide)m = (deoxyribonucleotide)n+m + AMP + beta-nicotinamide D-nucleotide.. DNA ligase that catalyzes the formation of phosphodiester linkages between 5'-phosphoryl and 3'-hydroxyl groups in double-stranded DNA using NAD as a coenzyme and as the energy source for the reaction. It is essential for DNA replication and repair of damaged DNA. This Streptococcus mutans serotype c (strain ATCC 700610 / UA159) protein is DNA ligase.